Here is a 217-residue protein sequence, read N- to C-terminus: Glycerol-3-phosphate acyltransferase (217 aa).

6 helical membrane passes run 3-23, 56-76, 78-98, 120-140, 142-162, and 163-183; these read IVIL…VWIG, VLLM…LFGL, GVNP…PIFA, FFIY…MVSL, SMIS…TVPA, and ILPT…TFIF.

It belongs to the PlsY family. Probably interacts with PlsX.

Its subcellular location is the cell membrane. It carries out the reaction an acyl phosphate + sn-glycerol 3-phosphate = a 1-acyl-sn-glycero-3-phosphate + phosphate. It functions in the pathway lipid metabolism; phospholipid metabolism. In terms of biological role, catalyzes the transfer of an acyl group from acyl-phosphate (acyl-PO(4)) to glycerol-3-phosphate (G3P) to form lysophosphatidic acid (LPA). This enzyme utilizes acyl-phosphate as fatty acyl donor, but not acyl-CoA or acyl-ACP. The protein is Glycerol-3-phosphate acyltransferase of Enterococcus faecalis (strain ATCC 700802 / V583).